The following is a 316-amino-acid chain: Probable peptidyl-tRNA hydrolase 2 (316 aa).

Positions 1-127 are disordered; it reads MSENIPDIDP…SHPVDPQEPN (127 aa). Over residues 44 to 53 the composition is skewed to polar residues; sequence PTPSSVTVDN. Low complexity predominate over residues 75 to 89; sequence IPEVPIPSSAISISS. In terms of domain architecture, UBA spans 128-169; the sequence is EVNNEYLAHLLDLGFDEYTAVLALKRTNSAGVEQAVAWIVER. Positions 170 to 193 are disordered; the sequence is SNESDFDEDSSSSENEADEEMGAV. A compositionally biased stretch (acidic residues) spans 173-190; it reads SDFDEDSSSSENEADEEM.

This sequence belongs to the PTH2 family.

The enzyme catalyses an N-acyl-L-alpha-aminoacyl-tRNA + H2O = an N-acyl-L-amino acid + a tRNA + H(+). The natural substrate for this enzyme may be peptidyl-tRNAs which drop off the ribosome during protein synthesis. The sequence is that of Probable peptidyl-tRNA hydrolase 2 from Caenorhabditis elegans.